Reading from the N-terminus, the 363-residue chain is Pyrimidine monooxygenase RutA (363 aa).

FMN contacts are provided by residues 49-50 (IK), Asn115, Glu124, 140-141 (RY), and Ser190.

This sequence belongs to the NtaA/SnaA/DszA monooxygenase family. RutA subfamily.

The enzyme catalyses uracil + FMNH2 + NADH + O2 = (Z)-3-ureidoacrylate + FMN + NAD(+) + H2O + H(+). The catalysed reaction is thymine + FMNH2 + NADH + O2 = (Z)-2-methylureidoacrylate + FMN + NAD(+) + H2O + H(+). Its function is as follows. Catalyzes the pyrimidine ring opening between N-3 and C-4 by an unusual flavin hydroperoxide-catalyzed mechanism, adding oxygen atoms in the process to yield ureidoacrylate peracid, that immediately reacts with FMN forming ureidoacrylate and FMN-N(5)-oxide. The FMN-N(5)-oxide reacts spontaneously with NADH to produce FMN. Requires the flavin reductase RutF to regenerate FMN in vivo. The sequence is that of Pyrimidine monooxygenase RutA from Klebsiella pneumoniae (strain 342).